The primary structure comprises 175 residues: MAPTVMASSATSVAPFQGLKSTAGLPVSRRSTNSGFGNVSNGGRIKCMQVWPIEGIKKFETLSYLPPLTVEDLLKQIEYLLRSKWVPCLEFSKVGFVYRENHRSPGYYDGRYWTMWKLPMFGCTDATQVLKELEEAKKAYPDAFVRIIGFDNVRQVQLISFIAYKPPGCEESGGN.

Residues 1–46 (MAPTVMASSATSVAPFQGLKSTAGLPVSRRSTNSGFGNVSNGGRIK) constitute a chloroplast transit peptide.

This sequence belongs to the RuBisCO small chain family. In terms of assembly, heterohexadecamer of 8 large and 8 small subunits.

The protein localises to the plastid. It is found in the chloroplast. RuBisCO catalyzes two reactions: the carboxylation of D-ribulose 1,5-bisphosphate, the primary event in carbon dioxide fixation, as well as the oxidative fragmentation of the pentose substrate. Both reactions occur simultaneously and in competition at the same active site. Although the small subunit is not catalytic it is essential for maximal activity. This chain is Ribulose bisphosphate carboxylase small subunit, chloroplastic 2, found in Oryza sativa subsp. japonica (Rice).